Consider the following 257-residue polypeptide: Snake venom serine protease 3 (257 aa).

Positions 1-18 (MVLIRVLANLLILQLSYA) are cleaved as a signal peptide. Positions 19-24 (QKSSEL) are excised as a propeptide. One can recognise a Peptidase S1 domain in the interval 25 to 248 (VIGGDECNIN…YTDWIQNIIA (224 aa)). 6 disulfides stabilise this stretch: cysteine 31–cysteine 163, cysteine 50–cysteine 66, cysteine 98–cysteine 255, cysteine 142–cysteine 209, cysteine 174–cysteine 188, and cysteine 199–cysteine 224. A glycan (N-linked (GlcNAc...) asparagine) is linked at asparagine 44. Histidine 65 serves as the catalytic Charge relay system. A glycan (N-linked (GlcNAc...) asparagine) is linked at asparagine 103. Aspartate 110 acts as the Charge relay system in catalysis. Asparagine 117 and asparagine 154 each carry an N-linked (GlcNAc...) asparagine glycan. The active-site Charge relay system is serine 203. Asparagine 250 carries N-linked (GlcNAc...) asparagine glycosylation.

It belongs to the peptidase S1 family. Snake venom subfamily. In terms of assembly, monomer. In terms of tissue distribution, expressed by the venom gland.

It is found in the secreted. Functionally, snake venom serine protease that may act in the hemostasis system of the prey. The polypeptide is Snake venom serine protease 3 (TLF3) (Protobothrops flavoviridis (Habu)).